We begin with the raw amino-acid sequence, 71 residues long: Phenoloxidase 3 (71 aa).

Cu cation-binding residues include His3 and His29.

It belongs to the tyrosinase family. Requires Cu(2+) as cofactor. Upon activation, a trypsin type protease cleaves prophenol oxidase to yield the active enzyme. Hemocytes and plasma.

It is found in the secreted. The enzyme catalyses 2 L-dopa + O2 = 2 L-dopaquinone + 2 H2O. It carries out the reaction L-tyrosine + O2 = L-dopaquinone + H2O. This is a copper-containing oxidase that functions in the formation of pigments such as melanins and other polyphenolic compounds. Catalyzes the rate-limiting conversions of tyrosine to DOPA, DOPA to DOPA-quinone and possibly 5,6 dihydroxyindole to indole-5'6 quinone. The polypeptide is Phenoloxidase 3 (Sarcophaga argyrostoma (Flesh fly)).